The following is an 83-amino-acid chain: Apolipoprotein C-I, basic form (83 aa).

A signal peptide spans 1–26 (MRLFLSLPVLVVVLSMVLEGPAPVQG).

It belongs to the apolipoprotein C1 family.

It is found in the secreted. Inhibitor of lipoprotein binding to the low density lipoprotein (LDL) receptor, LDL receptor-related protein, and very low density lipoprotein (VLDL) receptor. Associates with high density lipoproteins (HDL) and the triacylglycerol-rich lipoproteins in the plasma and makes up about 10% of the protein of the VLDL and 2% of that of HDL. Appears to interfere directly with fatty acid uptake and is also the major plasma inhibitor of cholesteryl ester transfer protein (CETP). Binds free fatty acids and reduces their intracellular esterification. Modulates the interaction of APOE with beta-migrating VLDL and inhibits binding of beta-VLDL to the LDL receptor-related protein. The protein is Apolipoprotein C-I, basic form (APOC1) of Papio anubis (Olive baboon).